We begin with the raw amino-acid sequence, 136 residues long: Ubiquinol-cytochrome-c reductase complex assembly factor 2 (136 aa).

Residues 1–13 (MAALRYRRFLKLC) constitute a mitochondrion transit peptide.

In terms of assembly, interacts with UQCC1.

The protein localises to the mitochondrion matrix. The protein resides in the mitochondrion nucleoid. It is found in the mitochondrion. Its subcellular location is the mitochondrion intermembrane space. It localises to the mitochondrion inner membrane. Required for the assembly of the ubiquinol-cytochrome c reductase complex (mitochondrial respiratory chain complex III or cytochrome b-c1 complex). Plays a role in the modulation of respiratory chain activities such as oxygen consumption and ATP production and via its modulation of the respiratory chain activity can regulate skeletal muscle differentiation and insulin secretion by pancreatic beta-cells. Involved in cytochrome b translation and/or stability. This Rattus norvegicus (Rat) protein is Ubiquinol-cytochrome-c reductase complex assembly factor 2 (Uqcc2).